Consider the following 283-residue polypeptide: Elongation factor Ts (283 aa).

The segment at 80-83 is involved in Mg(2+) ion dislocation from EF-Tu; it reads TDFV.

The protein belongs to the EF-Ts family.

It is found in the cytoplasm. Its function is as follows. Associates with the EF-Tu.GDP complex and induces the exchange of GDP to GTP. It remains bound to the aminoacyl-tRNA.EF-Tu.GTP complex up to the GTP hydrolysis stage on the ribosome. This chain is Elongation factor Ts, found in Haemophilus influenzae (strain 86-028NP).